A 1334-amino-acid polypeptide reads, in one-letter code: MSRSKESDELIFFVNGKKVIERNADPEVNLLFYLRKIIQLTGTKYGCGGGDCGACTVMISRYNPISKKISHFSAAACLVPICSLHGAAVTTVEGIGSTKTRIHPVQERIAKGHGTQCGFCTPGMVMSIYTLLRNHPEPSTEQIMETLGGNLCRCTGYRPIVESARSFSPNSACCPMNEKWKCCLDEGKNEPERKNSVCTKLYEKEEFQPLDPTQELIFPPELMRMAEDSPNTVLTFRGERTTWIAPGTLNDLLELKMEYPSAPLVIGNTCLGLDMKFKDVSYPIIISPARILELFVVTNTNEGLTLGAGLSLTQVKNILSDVVSRLPKERTQTYRALLKHLRTLAGQQIRNVASLGGHIISRLPTSDLNPIFGVGNCKLNVASTEGTQQIPLNDHFLAGVPEAILKPEQVLISVFVPLSRKWEFVSAFRQAPRQQNAFAIVNAGMRVAFKEDTNTITDLSILYGGIGATVVSAKSCQQLIGRCWDEEMLDDAGRMIREEVSLLTAAPGGMVEYRKTLAISFLFKFYLDVLKQLKRRNPHRCPDISQKLLQVLEDFPLTMPHGTQSFKDVDSQQPLQDQSGRPIMHQSGIKHATGEAVFCDDMSVLAGELFLAVVTSSKPHARIISLDASEALASPGVVDVITAQDVPGDNGREEESLYAQDEVICVGQIVCAVAADSYARAKQATKKVKIVYEDMEPMIVTVQDALQHESFIGPEKKLEQGNVQLAFQSADQILEGEVHLGGQEHFYMETQSVRVIPKGEDMEMDIYVSSQDAAFTQEMVARTLGIPKNRITCHVKRVGGGFGGKTSKPGLLASVAAVAAQKTGRPIRFILERGDDMLITGGRHPLLGKYRVGFMNNGKIKAADIQLYINGGCTPDDSELVIEYALLKLENAYKIPNLRVRGRVCKTNLPSNTAFRGFGFPQGAFVTGTWVSAVAAKCHLPPEKVRELNMYKTIDRTIHKQEFDPTNLIKCWETCMENSSYYSRKKAVDEFNQQSFWKKRGIAIIPMKFSVGFPKTFYHQAAALVQIYTDGSVLVAHGGVELGQGINTKMIQVASRELKIPMSYIHLDEMNTMTVPNTITTGGSTGADVNGRAVQNACQILMKRLEPIISQNPNGDWEEWINEAFIQSISLSATGYFRGYQADMDWEKGEGDIYPYFVFGAACSEVEIDCLTGAHKNIRTDIVMDGSFSINPAVDIGQIEGAFVQGLGLYTLEELKYSPEGVLYTRGPHQYKIASVSDIPEEFHVSLLTPTQNPKAIYSSKGLGEAGMFLGSSVFFAIAAAVAAARKERGLPLILAINSPATAEVIRMACEDQFTNLVPKTDSKCCKPWSIPVA.

Residues 8 to 95 (DELIFFVNGK…GAAVTTVEGI (88 aa)) enclose the 2Fe-2S ferredoxin-type domain. Residues Cys47, Cys52, Cys55, and Cys77 each coordinate [2Fe-2S] cluster. Gln116 provides a ligand contact to Mo-molybdopterin. [2Fe-2S] cluster contacts are provided by Cys117, Cys120, Cys152, and Cys154. One can recognise an FAD-binding PCMH-type domain in the interval 236–421 (FRGERTTWIA…ISVFVPLSRK (186 aa)). FAD is bound at residue 264-271 (LVIGNTCL). Phosphoserine is present on Ser320. FAD contacts are provided by Ser354, His358, Asp367, and Leu411. The Mo-molybdopterin site is built by Gly801, Leu1042, and Gln1198. Glu1265 serves as the catalytic Proton acceptor; for azaheterocycle hydroxylase activity.

It belongs to the xanthine dehydrogenase family. Homodimer. The cofactor is [2Fe-2S] cluster. It depends on FAD as a cofactor. Mo-molybdopterin serves as cofactor.

The protein resides in the cytoplasm. The enzyme catalyses an aldehyde + O2 + H2O = a carboxylate + H2O2 + H(+). Its function is as follows. Oxidase with broad substrate specificity, oxidizing aromatic azaheterocycles, such as N1-methylnicotinamide and phthalazine, as well as aldehydes, such as benzaldehyde, retinal and pyridoxal. Plays a key role in the metabolism of xenobiotics and drugs containing aromatic azaheterocyclic substituents. Is probably involved in the regulation of reactive oxygen species homeostasis. Is a prominent source of superoxide generation via the one-electron reduction of molecular oxygen. Also catalyzes nitric oxide (NO) production; under anaerobic conditions, reduces nitrite to NO with NADH or aldehyde as electron donor, but under aerobic conditions, NADH is the preferred substrate. These reactions may be catalyzed by several isozymes. The chain is Aldehyde oxidase 3 (Aox3) from Rattus norvegicus (Rat).